The primary structure comprises 61 residues: Lens epithelial cell protein LEP503 (61 aa).

This chain is Lens epithelial cell protein LEP503 (Lenep), found in Mus musculus (Mouse).